The primary structure comprises 132 residues: Small ribosomal subunit protein uS8 (132 aa).

Belongs to the universal ribosomal protein uS8 family. As to quaternary structure, part of the 30S ribosomal subunit. Contacts proteins S5 and S12.

Functionally, one of the primary rRNA binding proteins, it binds directly to 16S rRNA central domain where it helps coordinate assembly of the platform of the 30S subunit. In Azorhizobium caulinodans (strain ATCC 43989 / DSM 5975 / JCM 20966 / LMG 6465 / NBRC 14845 / NCIMB 13405 / ORS 571), this protein is Small ribosomal subunit protein uS8.